We begin with the raw amino-acid sequence, 87 residues long: Large ribosomal subunit protein bL31B (87 aa).

This sequence belongs to the bacterial ribosomal protein bL31 family. Type B subfamily. In terms of assembly, part of the 50S ribosomal subunit.

In Escherichia coli O9:H4 (strain HS), this protein is Large ribosomal subunit protein bL31B.